Consider the following 201-residue polypeptide: MAEKFIKHTGLVVPLDAANVDTDAIIPKQFLQKVTRTGFGAHLFNDWRFLDEKGQQPNPDFVLNFPQYQGASILLARENFGCGSSREHAPWALTDYGFKVVIAPSFADIFYGNSFNNQLLPVKLSDAEVDELFALVQANPGIHFDVDLEAQEVKAGEKTYRFTIDAFRRHCMMNGLDSIGLTLQHDDAIASYEEKQPAFMR.

This sequence belongs to the LeuD family. LeuD type 1 subfamily. As to quaternary structure, heterodimer of LeuC and LeuD.

The enzyme catalyses (2R,3S)-3-isopropylmalate = (2S)-2-isopropylmalate. The protein operates within amino-acid biosynthesis; L-leucine biosynthesis; L-leucine from 3-methyl-2-oxobutanoate: step 2/4. Its function is as follows. Catalyzes the isomerization between 2-isopropylmalate and 3-isopropylmalate, via the formation of 2-isopropylmaleate. The chain is 3-isopropylmalate dehydratase small subunit from Escherichia coli O127:H6 (strain E2348/69 / EPEC).